Consider the following 467-residue polypeptide: tRNA-2-methylthio-N(6)-dimethylallyladenosine synthase (467 aa).

Residues 4-124 (RKLFIKSYGC…LPEMVAKVER (121 aa)) form the MTTase N-terminal domain. Cys13, Cys49, Cys87, Cys161, Cys165, and Cys168 together coordinate [4Fe-4S] cluster. The region spanning 147 to 379 (QAHGPSAFLS…QARLVEIQQA (233 aa)) is the Radical SAM core domain. In terms of domain architecture, TRAM spans 382 to 444 (QACVGRPMDV…SNSLAARLVE (63 aa)).

The protein belongs to the methylthiotransferase family. MiaB subfamily. Monomer. [4Fe-4S] cluster is required as a cofactor.

It is found in the cytoplasm. The enzyme catalyses N(6)-dimethylallyladenosine(37) in tRNA + (sulfur carrier)-SH + AH2 + 2 S-adenosyl-L-methionine = 2-methylsulfanyl-N(6)-dimethylallyladenosine(37) in tRNA + (sulfur carrier)-H + 5'-deoxyadenosine + L-methionine + A + S-adenosyl-L-homocysteine + 2 H(+). Functionally, catalyzes the methylthiolation of N6-(dimethylallyl)adenosine (i(6)A), leading to the formation of 2-methylthio-N6-(dimethylallyl)adenosine (ms(2)i(6)A) at position 37 in tRNAs that read codons beginning with uridine. In Rhodospirillum rubrum (strain ATCC 11170 / ATH 1.1.1 / DSM 467 / LMG 4362 / NCIMB 8255 / S1), this protein is tRNA-2-methylthio-N(6)-dimethylallyladenosine synthase.